The following is a 541-amino-acid chain: Chaperonin GroEL, cyanelle (541 aa).

ATP contacts are provided by residues 29–32, 86–90, Gly413, 479–481, and Asp495; these read TLGP, DGTTT, and NAA.

It belongs to the chaperonin (HSP60) family. As to quaternary structure, forms a cylinder of 14 subunits composed of two heptameric rings stacked back-to-back. Interacts with the co-chaperonin GroES.

The protein resides in the plastid. The protein localises to the cyanelle. It carries out the reaction ATP + H2O + a folded polypeptide = ADP + phosphate + an unfolded polypeptide.. Together with its co-chaperonin GroES, plays an essential role in assisting protein folding. The GroEL-GroES system forms a nano-cage that allows encapsulation of the non-native substrate proteins and provides a physical environment optimized to promote and accelerate protein folding. The protein is Chaperonin GroEL, cyanelle of Cyanophora paradoxa.